The primary structure comprises 68 residues: Guanine nucleotide-binding protein G(I)/G(S)/G(O) subunit gamma-10 (68 aa).

The residue at position 2 (serine 2) is an N-acetylserine. Cysteine 65 is subject to Cysteine methyl ester. Cysteine 65 carries S-geranylgeranyl cysteine lipidation. The propeptide at 66 to 68 (ALL) is removed in mature form.

This sequence belongs to the G protein gamma family. As to quaternary structure, g proteins are composed of 3 units, alpha, beta and gamma. In terms of tissue distribution, abundantly and ubiquitously expressed.

The protein localises to the cell membrane. Guanine nucleotide-binding proteins (G proteins) are involved as a modulator or transducer in various transmembrane signaling systems. The beta and gamma chains are required for the GTPase activity, for replacement of GDP by GTP, and for G protein-effector interaction. Interacts with beta-1 and beta-2, but not with beta-3. The polypeptide is Guanine nucleotide-binding protein G(I)/G(S)/G(O) subunit gamma-10 (GNG10) (Homo sapiens (Human)).